Here is a 208-residue protein sequence, read N- to C-terminus: Pyridoxine/pyridoxamine 5'-phosphate oxidase (208 aa).

FMN is bound by residues 55–60 (RMVLLK), 70–71 (YT), lysine 77, and glutamine 99. Residue lysine 60 participates in substrate binding. 3 residues coordinate substrate: tyrosine 117, arginine 121, and serine 125. FMN is bound by residues 134–135 (QS) and tryptophan 180. Substrate is bound at residue 186 to 188 (RIH). Position 190 (arginine 190) interacts with FMN.

It belongs to the pyridoxamine 5'-phosphate oxidase family. Homodimer. Requires FMN as cofactor.

It carries out the reaction pyridoxamine 5'-phosphate + O2 + H2O = pyridoxal 5'-phosphate + H2O2 + NH4(+). It catalyses the reaction pyridoxine 5'-phosphate + O2 = pyridoxal 5'-phosphate + H2O2. Its pathway is cofactor metabolism; pyridoxal 5'-phosphate salvage; pyridoxal 5'-phosphate from pyridoxamine 5'-phosphate: step 1/1. It participates in cofactor metabolism; pyridoxal 5'-phosphate salvage; pyridoxal 5'-phosphate from pyridoxine 5'-phosphate: step 1/1. Functionally, catalyzes the oxidation of either pyridoxine 5'-phosphate (PNP) or pyridoxamine 5'-phosphate (PMP) into pyridoxal 5'-phosphate (PLP). This Pelagibacter ubique (strain HTCC1062) protein is Pyridoxine/pyridoxamine 5'-phosphate oxidase.